A 340-amino-acid polypeptide reads, in one-letter code: GTP 3',8-cyclase (340 aa).

Positions 8-227 (KLGRPIRDLR…TMIEQHFEID (220 aa)) constitute a Radical SAM core domain. R17 lines the GTP pocket. [4Fe-4S] cluster contacts are provided by C24 and C28. Y30 is a binding site for S-adenosyl-L-methionine. C31 contributes to the [4Fe-4S] cluster binding site. R71 serves as a coordination point for GTP. G75 is a binding site for S-adenosyl-L-methionine. Residue T102 participates in GTP binding. S126 serves as a coordination point for S-adenosyl-L-methionine. GTP is bound at residue K163. Residue M197 participates in S-adenosyl-L-methionine binding. C261 and C264 together coordinate [4Fe-4S] cluster. Residue 266 to 268 (RAR) participates in GTP binding. Residue C278 coordinates [4Fe-4S] cluster.

The protein belongs to the radical SAM superfamily. MoaA family. Monomer and homodimer. It depends on [4Fe-4S] cluster as a cofactor.

The enzyme catalyses GTP + AH2 + S-adenosyl-L-methionine = (8S)-3',8-cyclo-7,8-dihydroguanosine 5'-triphosphate + 5'-deoxyadenosine + L-methionine + A + H(+). Its pathway is cofactor biosynthesis; molybdopterin biosynthesis. Functionally, catalyzes the cyclization of GTP to (8S)-3',8-cyclo-7,8-dihydroguanosine 5'-triphosphate. This is GTP 3',8-cyclase from Staphylococcus aureus (strain Mu3 / ATCC 700698).